The primary structure comprises 950 residues: Serine/threonine-protein phosphatase 4 regulatory subunit 1 (950 aa).

HEAT repeat units lie at residues 1 to 25, 26 to 63, 65 to 81, 82 to 119, 127 to 164, 168 to 206, 208 to 246, 248 to 285, and 287 to 324; these read MADLSLLQEDLQEDADGFGVDDYSS, ESDVIIIPSALDFVSQDEMLTPLGRLDKYAASENIFNR, MVARSLLDTLREVCDDE, RDCIAVLERISRLADDSEPTVRAELMEQVPHIALFCQE, AFSKFLLPIVVRYLADQNNQVRKTSQAALLALLEQELI, DVETKVCPVLIELTAPDSNDDVKTEAVAIMCKMAPMVGK, ITERLILPRFCEMCCDCRMFHVRKVCAANFGDICSVVGQ, ATEEMLLPRFFQLCSDNVWGVRKACAECFMAVSCATCQ, and IRRTKLSALFINLISDPSRWVRQAAFQSLGPFISTFAN. Disordered stretches follow at residues 326–374, 413–438, and 473–499; these read SSSG…SVSN, ESHQEAASNENDKKPGNYKSMLRPEV, and EQNSGGKPSPEGPEEESEGPVPSSPNI. Over residues 332–365 the composition is skewed to basic and acidic residues; the sequence is FKEESKSSEEMSVENKNRTRDQEAPEDVQVRPED. HEAT repeat units lie at residues 505–542, 568–606, 698–734, 799–837, and 861–898; these read KELEEMIENLEPHIDDPDVKAQVEVLSAALRASSLDAH, INQEDSVPLISDAVENMDSTLHYIHSDSDLSNNSSFSPD, LTAADLVPIFNGFLKDLDEVRIGVLKHLHDFLKLLHI, WISYKLVSEMVKKLHAATPPTFGVDLINELVENFGRCPK, and QFAVHLMPHLLTLANDRVPNVRVLLAKTLRQTLLEKDY. Ser935 is modified (phosphoserine).

Serine/threonine-protein phosphatase 4 (PP4) occurs in different assemblies of the catalytic and one or more regulatory subunits. Component of the PP4 complex PPP4C-PPP4R1. Interacts with HDAC3. As to quaternary structure, (Microbial infection) Interacts with merkel polyomavirus small tumor antigen; this interaction bridges small tumor antigen with NEMO to inhibit NF-kappa-B. In terms of tissue distribution, widely expressed with high expression in cultured mesangial cells. Isoform 1 and isoform 2 are expressed in renal tissues.

Functionally, regulatory subunit of serine/threonine-protein phosphatase 4. May play a role in regulation of cell division in renal glomeruli. The PPP4C-PPP4R1 PP4 complex may play a role in dephosphorylation and regulation of HDAC3. Plays a role in the inhibition of TNF-induced NF-kappa-B activation by regulating the dephosphorylation of TRAF2. In terms of biological role, (Microbial infection) Participates in merkel polyomavirus-mediated inhibition of NF-kappa-B by bridging viral small tumor antigen with NEMO. The sequence is that of Serine/threonine-protein phosphatase 4 regulatory subunit 1 (PPP4R1) from Homo sapiens (Human).